The chain runs to 217 residues: Small ribosomal subunit protein uS2 (217 aa).

It belongs to the universal ribosomal protein uS2 family.

This is Small ribosomal subunit protein uS2 from Korarchaeum cryptofilum (strain OPF8).